The chain runs to 256 residues: MALAKRIIPCLDVDNGRVVKGVQFENIRDAGDPVEIARRYDEQGADEITFLDITASVDNRDTTLHTVERMASQVFIPLTVGGGVRTVQDIRNLLNAGADKVSINTAAVFNPDFVGEAADRFGSQCIVVAIDAKKVSAPGEPGRWEIFTHGGRKPTGLDAVEWAKKMEALGAGEILLTSMDQDGVKSGYDLGVTRAISEALCIPVIASGGVGNLQHLADGILEGKADAVLAASIFHFGEYTVPEAKAYLAARGIVMR.

Catalysis depends on residues D12 and D131.

This sequence belongs to the HisA/HisF family. As to quaternary structure, heterodimer of HisH and HisF.

Its subcellular location is the cytoplasm. It carries out the reaction 5-[(5-phospho-1-deoxy-D-ribulos-1-ylimino)methylamino]-1-(5-phospho-beta-D-ribosyl)imidazole-4-carboxamide + L-glutamine = D-erythro-1-(imidazol-4-yl)glycerol 3-phosphate + 5-amino-1-(5-phospho-beta-D-ribosyl)imidazole-4-carboxamide + L-glutamate + H(+). It participates in amino-acid biosynthesis; L-histidine biosynthesis; L-histidine from 5-phospho-alpha-D-ribose 1-diphosphate: step 5/9. Functionally, IGPS catalyzes the conversion of PRFAR and glutamine to IGP, AICAR and glutamate. The HisF subunit catalyzes the cyclization activity that produces IGP and AICAR from PRFAR using the ammonia provided by the HisH subunit. The sequence is that of Imidazole glycerol phosphate synthase subunit HisF from Stutzerimonas stutzeri (strain A1501) (Pseudomonas stutzeri).